We begin with the raw amino-acid sequence, 263 residues long: Proliferating cell nuclear antigen (263 aa).

Residues 61–80 mediate DNA binding; that stretch reads RCDRTINLGLSLANMSKALK.

This sequence belongs to the PCNA family. In terms of assembly, homotrimer. Forms a complex with activator 1 heteropentamer in the presence of ATP.

The protein localises to the nucleus. This protein is an auxiliary protein of DNA polymerase delta and is involved in the control of eukaryotic DNA replication by increasing the polymerase's processibility during elongation of the leading strand. This is Proliferating cell nuclear antigen (pcn-1) from Caenorhabditis elegans.